A 776-amino-acid polypeptide reads, in one-letter code: MFVRFYKRLDRQYIQSQRRWILSSNKCLLQGNKNATISPLRRAFDDQDHWEESQAQNTSSEQDNKGKNSSYFWSRSKATAPQVAHTGLFQNPYLNSPEGLRKFANKSLTEATALVRNLREDSSQEGLVRYIIRLDQLSDILCRVIDLCEFLRAAHPDEQFVAAAQECHEQMFEIMNILNTDVVLCKRLKQVLSDENISSKLSSEEIRVGHILLEDFEKAGAYASPEVRKQFIQLSQNISIIGQDFINNTESLSSSYIKIPCKDLESSGTSHLVLRQLTKDTMGNNYKIPTSGYAPYTLLNACPSEAIRRQVWTAMFSCSEKQVKRLKSLLQLRRKLANIMGATDYVSYQLEGKMAKSPENVKNFLNTLVDHTKPLAAGELEELAKLKRNVENLSETNTLKLMRPWDRDYYSSLSPNFTRPNHRVDGFTSINTYFSLGVVMQGISDLFRDIYGISLKPVVAQAGETWAPDVRKLQVISETEGIIGLIYCDLLERPGKTTSPSHFTVCCSRQIYPEENDFSTIQVGENPDGSRFQMPVISLICNFRATRHGKNKSLCLLELSDVETLFHEMGHALHSMLGRTQLQNLSGTRCVTDFVELPSILMEHFAKDRRVLLRISSNYATGEPIPEELLSAFQEQNNFLKNTETFSQIKMSMLDQRLHSITDQDDIIAVYHGLEREMEVLVDDQTNWCGRFGHLFGYGASYYSYLMDRAIAAKIWDHLFKKDPFSRSSGEKFKEGVLKWGGSRDAWQCIADALDEPRLVKGDDWAMRFIGEVEDM.

Residues 1 to 28 (MFVRFYKRLDRQYIQSQRRWILSSNKCL) constitute a mitochondrion transit peptide. The tract at residues 48–71 (DHWEESQAQNTSSEQDNKGKNSSY) is disordered. Polar residues predominate over residues 53–71 (SQAQNTSSEQDNKGKNSSY). Zn(2+) is bound at residue His-567. Glu-568 is an active-site residue. Residues His-571 and His-574 each contribute to the Zn(2+) site.

This sequence belongs to the peptidase M3 family. Zn(2+) serves as cofactor.

The protein localises to the mitochondrion matrix. The enzyme catalyses Release of an N-terminal octapeptide as second stage of processing of some proteins imported into the mitochondrion.. In terms of biological role, cleaves proteins, imported into the mitochondrion, to their mature size. While most mitochondrial precursor proteins are processed to the mature form in one step by mitochondrial processing peptidase (MPP), the sequential cleavage by MIP of an octapeptide after initial processing by MPP is a required step for a subgroup of nuclear-encoded precursor proteins destined for the matrix or the inner membrane. The sequence is that of Mitochondrial intermediate peptidase (OCT1) from Eremothecium gossypii (strain ATCC 10895 / CBS 109.51 / FGSC 9923 / NRRL Y-1056) (Yeast).